Here is a 292-residue protein sequence, read N- to C-terminus: uncharacterized protein (292 aa).

A disordered region spans residues 62 to 81; the sequence is ESSSDSDMGFHESQQNQKSN.

This is an uncharacterized protein from Homo sapiens (Human).